Reading from the N-terminus, the 715-residue chain is Fatty acid oxidation complex subunit alpha (715 aa).

Positions 1–190 (MIYQGKAITV…KVGAVDAVVA (190 aa)) are enoyl-CoA hydratase/isomerase. Substrate is bound at residue D297. The segment at 312-715 (KDVKLAAVLG…MAKNGQKFFG (404 aa)) is 3-hydroxyacyl-CoA dehydrogenase. NAD(+)-binding positions include M325, D344, 401-403 (VVE), K408, and S430. H451 acts as the For 3-hydroxyacyl-CoA dehydrogenase activity in catalysis. NAD(+) is bound at residue N454. Substrate-binding residues include N501 and Y660.

It in the N-terminal section; belongs to the enoyl-CoA hydratase/isomerase family. In the C-terminal section; belongs to the 3-hydroxyacyl-CoA dehydrogenase family. In terms of assembly, heterotetramer of two alpha chains (FadB) and two beta chains (FadA).

It catalyses the reaction a (3S)-3-hydroxyacyl-CoA + NAD(+) = a 3-oxoacyl-CoA + NADH + H(+). The enzyme catalyses a (3S)-3-hydroxyacyl-CoA = a (2E)-enoyl-CoA + H2O. The catalysed reaction is a 4-saturated-(3S)-3-hydroxyacyl-CoA = a (3E)-enoyl-CoA + H2O. It carries out the reaction (3S)-3-hydroxybutanoyl-CoA = (3R)-3-hydroxybutanoyl-CoA. It catalyses the reaction a (3Z)-enoyl-CoA = a 4-saturated (2E)-enoyl-CoA. The enzyme catalyses a (3E)-enoyl-CoA = a 4-saturated (2E)-enoyl-CoA. It participates in lipid metabolism; fatty acid beta-oxidation. In terms of biological role, involved in the aerobic and anaerobic degradation of long-chain fatty acids via beta-oxidation cycle. Catalyzes the formation of 3-oxoacyl-CoA from enoyl-CoA via L-3-hydroxyacyl-CoA. It can also use D-3-hydroxyacyl-CoA and cis-3-enoyl-CoA as substrate. This chain is Fatty acid oxidation complex subunit alpha, found in Pseudomonas paraeruginosa (strain DSM 24068 / PA7) (Pseudomonas aeruginosa (strain PA7)).